A 417-amino-acid chain; its full sequence is Serine hydroxymethyltransferase 1 (417 aa).

Residues Leu-121 and 125 to 127 (GHL) each bind (6S)-5,6,7,8-tetrahydrofolate. At Lys-229 the chain carries N6-(pyridoxal phosphate)lysine. A (6S)-5,6,7,8-tetrahydrofolate-binding site is contributed by 354–356 (SPF).

This sequence belongs to the SHMT family. As to quaternary structure, homodimer. Pyridoxal 5'-phosphate serves as cofactor.

The protein localises to the cytoplasm. It catalyses the reaction (6R)-5,10-methylene-5,6,7,8-tetrahydrofolate + glycine + H2O = (6S)-5,6,7,8-tetrahydrofolate + L-serine. It functions in the pathway one-carbon metabolism; tetrahydrofolate interconversion. Its pathway is amino-acid biosynthesis; glycine biosynthesis; glycine from L-serine: step 1/1. In terms of biological role, catalyzes the reversible interconversion of serine and glycine with tetrahydrofolate (THF) serving as the one-carbon carrier. This reaction serves as the major source of one-carbon groups required for the biosynthesis of purines, thymidylate, methionine, and other important biomolecules. Also exhibits THF-independent aldolase activity toward beta-hydroxyamino acids, producing glycine and aldehydes, via a retro-aldol mechanism. In Pseudomonas savastanoi pv. phaseolicola (strain 1448A / Race 6) (Pseudomonas syringae pv. phaseolicola (strain 1448A / Race 6)), this protein is Serine hydroxymethyltransferase 1.